The chain runs to 305 residues: MSISASLVKELRDLTGAGMMDCKTALAETNGDIEAAVDWLRAKGIAKADKKAGRTAAEGLVGVAASGNKAVVVEVNSETDFVARNDAFQDLVRKIAQAALSTDGSTEAVANANVDGKTVTETAKDAVATIGENIGFRRSAALTVPQGVVATYIHNGVADGLGKLGVLVAIETAGDAEAANAFGRQVAMHVAAINPLALTAEDVDPAAAEREKAIFIEQARESGKPDNIIEKMIEGRMRKFYEEVVLLSQAFVINPDLTVAAALKEAEKTIGAPAKITGFVRVALGEGIEKEETDFAAEVAAAAKG.

Residues 79–82 (TDFV) are involved in Mg(2+) ion dislocation from EF-Tu.

Belongs to the EF-Ts family.

It localises to the cytoplasm. Its function is as follows. Associates with the EF-Tu.GDP complex and induces the exchange of GDP to GTP. It remains bound to the aminoacyl-tRNA.EF-Tu.GTP complex up to the GTP hydrolysis stage on the ribosome. The protein is Elongation factor Ts of Brucella anthropi (strain ATCC 49188 / DSM 6882 / CCUG 24695 / JCM 21032 / LMG 3331 / NBRC 15819 / NCTC 12168 / Alc 37) (Ochrobactrum anthropi).